The primary structure comprises 345 residues: Protein-arginine kinase (345 aa).

The Phosphagen kinase C-terminal domain occupies 15–245 (LVISSRIRLA…LQIINQEIIS (231 aa)). ATP is bound by residues 18 to 22 (SSRIR), H82, R116, 167 to 171 (RASVM), and 198 to 203 (RGLYGE). The RDXXRA motif of the pArg binding pocket involved in allosteric regulation signature appears at 328 to 333 (RDFNRA).

It belongs to the ATP:guanido phosphotransferase family.

The enzyme catalyses L-arginyl-[protein] + ATP = N(omega)-phospho-L-arginyl-[protein] + ADP + H(+). Its activity is regulated as follows. Appears to be allosterically activated by the binding of pArg-containing polypeptides to the pArg-binding pocket localized in the C-terminal domain of McsB. Functionally, catalyzes the specific phosphorylation of arginine residues in proteins. The sequence is that of Protein-arginine kinase from Clostridium kluyveri (strain NBRC 12016).